Reading from the N-terminus, the 757-residue chain is Polyribonucleotide nucleotidyltransferase (757 aa).

Mg(2+) is bound by residues Asp525 and Asp531. The 60-residue stretch at 591 to 650 (PRVISVNIPVDKIGELIGPKGKTINAIQDETGADISIEEDGTVYIGAVDGPSADAARAQV) folds into the KH domain. Residues 662-734 (GESFLGTVVK…DRGKLSLAPV (73 aa)) form the S1 motif domain. Residues 737 to 757 (ETADQEGRDAASHGSEAPAEG) are disordered.

This sequence belongs to the polyribonucleotide nucleotidyltransferase family. Mg(2+) serves as cofactor.

Its subcellular location is the cytoplasm. The enzyme catalyses RNA(n+1) + phosphate = RNA(n) + a ribonucleoside 5'-diphosphate. Involved in mRNA degradation. Catalyzes the phosphorolysis of single-stranded polyribonucleotides processively in the 3'- to 5'-direction. The protein is Polyribonucleotide nucleotidyltransferase of Clavibacter michiganensis subsp. michiganensis (strain NCPPB 382).